The chain runs to 456 residues: Phosphatidylinositol N-acetylglucosaminyltransferase gpi3 subunit (456 aa).

It belongs to the glycosyltransferase group 1 family. Glycosyltransferase 4 subfamily. As to quaternary structure, component of a Phosphatidylinositol N-acetylglucosaminyltransferase complex.

It carries out the reaction a 1,2-diacyl-sn-glycero-3-phospho-(1D-myo-inositol) + UDP-N-acetyl-alpha-D-glucosamine = a 6-(N-acetyl-alpha-D-glucosaminyl)-1-(1,2-diacyl-sn-glycero-3-phospho)-1D-myo-inositol + UDP + H(+). Its pathway is glycolipid biosynthesis; glycosylphosphatidylinositol-anchor biosynthesis. Functionally, catalytic subunit in the complex catalyzing the transfer of N-acetylglucosamine from UDP-N-acetylglucosamine to phosphatidylinositol, the first step of GPI biosynthesis. This chain is Phosphatidylinositol N-acetylglucosaminyltransferase gpi3 subunit (gpi3), found in Schizosaccharomyces pombe (strain 972 / ATCC 24843) (Fission yeast).